A 247-amino-acid chain; its full sequence is Chymase (247 aa).

An N-terminal signal peptide occupies residues 1–19 (MLLLPLPLLLLFLCSRAEA). Residues 20–21 (GE) constitute a propeptide, activation peptide. One can recognise a Peptidase S1 domain in the interval 22–245 (IIGGTECKPH…YRPWINKILQ (224 aa)). A disulfide bridge connects residues Cys51 and Cys67. His66 serves as the catalytic Charge relay system. 2 N-linked (GlcNAc...) asparagine glycosylation sites follow: Asn80 and Asn103. Catalysis depends on Asp110, which acts as the Charge relay system. 2 cysteine pairs are disulfide-bonded: Cys144/Cys209 and Cys175/Cys188. Catalysis depends on Ser203, which acts as the Charge relay system.

It belongs to the peptidase S1 family. Granzyme subfamily.

The protein localises to the secreted. The protein resides in the cytoplasmic granule. It catalyses the reaction Preferential cleavage: Phe-|-Xaa &gt; Tyr-|-Xaa &gt; Trp-|-Xaa &gt; Leu-|-Xaa.. Its function is as follows. Major secreted protease of mast cells with suspected roles in vasoactive peptide generation, extracellular matrix degradation, and regulation of gland secretion. This Papio hamadryas (Hamadryas baboon) protein is Chymase (CMA1).